A 556-amino-acid polypeptide reads, in one-letter code: Interleukin-1 receptor-like 1 (556 aa).

An N-terminal signal peptide occupies residues 1–18 (MGFWILAILTILMYSTAA). Ig-like C2-type domains are found at residues 19–103 (KFSK…ANVT) and 114–197 (PDYL…VTAT). Over 19–328 (KFSKQSWGLE…SRKNPIDHHS (310 aa)) the chain is Extracellular. The cysteines at positions 36 and 87 are disulfide-linked. Residues asparagine 54, asparagine 95, asparagine 101, asparagine 140, and asparagine 191 are each glycosylated (N-linked (GlcNAc...) asparagine). Disulfide bonds link cysteine 111–cysteine 151 and cysteine 133–cysteine 181. The tract at residues 198–211 (RSFTVKDEQGFSLF) is flexible linker. The Ig-like C2-type 3 domain maps to 212–319 (PVIGAPAQNE…GLRRHTVRLS (108 aa)). 3 N-linked (GlcNAc...) asparagine glycosylation sites follow: asparagine 232, asparagine 254, and asparagine 273. 2 disulfides stabilise this stretch: cysteine 235–cysteine 303 and cysteine 238–cysteine 282. Residue lysine 321 forms a Glycyl lysine isopeptide (Lys-Gly) (interchain with G-Cter in ubiquitin) linkage. A helical transmembrane segment spans residues 329–349 (IYCIIAVCSVFLMLINVLVII). Topologically, residues 350-556 (LKMFWIEATL…SLTPLAAQKQ (207 aa)) are cytoplasmic. One can recognise a TIR domain in the interval 375–535 (KLYDAYVVYP…KFWKHVRYQM (161 aa)). Residue glutamate 461 is part of the active site.

It belongs to the interleukin-1 receptor family. As to quaternary structure, interacts with MYD88, IRAK1, IRAK4, and TRAF6. Bound to its ligand IL-33, interacts with IL1RAP to form the minimal interleukin-33 signaling complex with a 1:1:1 stoichiometry. Interacts with KIT (bound to KITLG/SCF). A mast cell-specific KITLG/SCF-induced interleukin-33 signaling complex contains IL1RL1, IL1RAP, KIT and MYD88. Interacts with TMED1. Post-translationally, ubiquitinated at Lys-321 in a FBXL19-mediated manner; leading to proteasomal degradation. Ubiquitination by TRAF6 via 'Lys-27'-linked polyubiquitination and deubiquitination by USP38 serves as a critical regulatory mechanism for fine-tuning IL1RL1-mediated inflammatory response. In terms of tissue distribution, highly expressed in kidney, lung, placenta, stomach, skeletal muscle, colon and small intestine. Isoform A is prevalently expressed in the lung, testis, placenta, stomach and colon. Isoform B is more abundant in the brain, kidney and the liver. Isoform C is not detected in brain, heart, liver, kidney and skeletal muscle. Expressed on T-cells in fibrotic liver; at protein level. Overexpressed in fibrotic and cirrhotic liver.

It localises to the cell membrane. It is found in the secreted. It carries out the reaction NAD(+) + H2O = ADP-D-ribose + nicotinamide + H(+). Its function is as follows. Receptor for interleukin-33 (IL-33) which plays crucial roles in innate and adaptive immunity, contributing to tissue homeostasis and responses to environmental stresses together with coreceptor IL1RAP. Its stimulation recruits MYD88, IRAK1, IRAK4, and TRAF6, followed by phosphorylation of MAPK3/ERK1 and/or MAPK1/ERK2, MAPK14, and MAPK8. Possibly involved in helper T-cell function. Upon tissue injury, induces UCP2-dependent mitochondrial rewiring that attenuates the generation of reactive oxygen species and preserves the integrity of Krebs cycle required for persistent production of itaconate and subsequent GATA3-dependent differentiation of inflammation-resolving alternatively activated macrophages. Functionally, inhibits IL-33 signaling. The polypeptide is Interleukin-1 receptor-like 1 (IL1RL1) (Homo sapiens (Human)).